The primary structure comprises 183 residues: Bifunctional protein PyrR (183 aa).

Residues 102–114 (VVLVDDVLYTGRT) carry the PRPP-binding motif.

It belongs to the purine/pyrimidine phosphoribosyltransferase family. PyrR subfamily. In terms of assembly, homodimer and homohexamer; in equilibrium.

It carries out the reaction UMP + diphosphate = 5-phospho-alpha-D-ribose 1-diphosphate + uracil. Its function is as follows. Regulates transcriptional attenuation of the pyrimidine nucleotide (pyr) operon by binding in a uridine-dependent manner to specific sites on pyr mRNA. This disrupts an antiterminator hairpin in the RNA and favors formation of a downstream transcription terminator, leading to a reduced expression of downstream genes. Functionally, also displays a weak uracil phosphoribosyltransferase activity which is not physiologically significant. This chain is Bifunctional protein PyrR, found in Listeria monocytogenes serotype 4b (strain CLIP80459).